We begin with the raw amino-acid sequence, 143 residues long: Glutaredoxin-2 (143 aa).

A mitochondrion-targeting transit peptide spans 1–30 (METNFSFDSNLIVIIIITLFATRIIAKRFL). Position 37 is a phosphoserine (Ser37). Positions 41–143 (VAHVKDLIGQ…LAEILKPVFQ (103 aa)) constitute a Glutaredoxin domain. 58–63 (KTYCPY) serves as a coordination point for glutathione. Cys61 is modified (S-glutathionyl cysteine; alternate). A disulfide bridge links Cys61 with Cys64. Ser91 is subject to Phosphoserine. Glutathione is bound by residues Val109 and 122 to 123 (NS).

It belongs to the glutaredoxin family.

It localises to the cytoplasm. The protein localises to the mitochondrion. The catalysed reaction is 2 glutathione + H2O2 = glutathione disulfide + 2 H2O. It catalyses the reaction 1-chloro-2,4-dinitrobenzene + glutathione = 2,4-dinitrophenyl-S-glutathione + chloride + H(+). The enzyme catalyses RX + glutathione = an S-substituted glutathione + a halide anion + H(+). In terms of biological role, component of the glutathione system which performs several activities such as glutathione-dependent oxidoreductase, glutathione peroxidase and glutathione S-transferase (GST) activity. The disulfide bond functions as an electron carrier in the glutathione-dependent synthesis of deoxyribonucleotides by the enzyme ribonucleotide reductase. In addition, it is also involved in reducing cytosolic protein- and non-protein-disulfides in a coupled system with glutathione reductase. Required for resistance to reactive oxygen species (ROS) by directly reducing hydroperoxides and for the detoxification of ROS-mediated damage. GRX2 is more active as an oxidoreductase than GRX1. Responsible for the S-glutathionylation of DHBP synthase. The chain is Glutaredoxin-2 (GRX2) from Saccharomyces cerevisiae (strain ATCC 204508 / S288c) (Baker's yeast).